Consider the following 264-residue polypeptide: MTVHKNRFRRSRSLSVTHRIQKRPDHREKTKLYLQLKLHDLHAVFNLFPEYEQKFLAIIKLPITGKEPIDVPFSLSNHHQHTCLEFSPYANEQISKSACLHCESVSVPTSSDAMVAHLNQVTNVMQNRFYFYGFRKDMELIRMSAKQPTIFQIFYIVHNTINNIFPIMFEKKQKLGMHIVFQSRTLHIPCECIKQIIAVSSGYNVYLDILQDSVILTVLCETLDTNTNIHIDIGMLQKKLEEMDIPNEISDRLEKYKGHLIGFH.

Basic residues predominate over residues 1-12; sequence MTVHKNRFRRSR. Residues 1-22 form a disordered region; that stretch reads MTVHKNRFRRSRSLSVTHRIQK. The CCCH-type zinc finger occupies 83 to 187; sequence CLEFSPYANE…HIVFQSRTLH (105 aa).

It belongs to the herpesviridae NEC1 protein family. As to quaternary structure, forms a heterohexameric complex with NEC2. Interacts with capsid vertex specific component 2/CVC2; this interaction directs the capsid to the host inner nuclear membrane to initiate budding. Phosphorylated at serine residues in the N-terminus. This phosphorylation regulates the localization within the inner nuclear membrane.

It localises to the host nucleus inner membrane. Plays an essential role in virion nuclear egress, the first step of virion release from infected cell. Within the host nucleus, NEC1 interacts with the newly formed capsid through the vertexes and directs it to the inner nuclear membrane by associating with NEC2. Induces the budding of the capsid at the inner nuclear membrane as well as its envelopment into the perinuclear space. There, the NEC1/NEC2 complex promotes the fusion of the enveloped capsid with the outer nuclear membrane and the subsequent release of the viral capsid into the cytoplasm where it will reach the secondary budding sites in the host Golgi or trans-Golgi network. This chain is Nuclear egress protein 1, found in Human herpesvirus 6B (HHV-6 variant B).